Reading from the N-terminus, the 735-residue chain is Peroxisomal multifunctional enzyme type 2 (735 aa).

The interval 1 to 305 (MASPLRFDGR…IEVLHKIDSE (305 aa)) is (3R)-hydroxyacyl-CoA dehydrogenase. NAD(+) is bound by residues 16-40 (GAGGGLGRAYALAFAERGALVVVND), Leu21, and Asp40. Lys46 is subject to N6-acetyllysine; alternate. The residue at position 46 (Lys46) is an N6-succinyllysine; alternate. Ser52 is subject to Phosphoserine. Lys57 and Lys68 each carry N6-succinyllysine. 75–76 (SV) lines the NAD(+) pocket. At Lys84 the chain carries N6-succinyllysine. Asn99 is an NAD(+) binding site. Ser151 provides a ligand contact to substrate. Tyr164 acts as the Proton acceptor in catalysis. NAD(+) contacts are provided by residues 164-168 (YSAAK) and 196-199 (AGSR). Thr265 carries the phosphothreonine modification. Lys275 carries the post-translational modification N6-succinyllysine. A phosphoserine mark is found at Ser304 and Ser308. The segment at 321–621 (SGFAGVVGHK…AQTPSEGGAL (301 aa)) is enoyl-CoA hydratase 2. N6-succinyllysine is present on Lys355. Residue 405–406 (HG) coordinates (3R)-3-hydroxydecanoyl-CoA. Residue Lys423 is modified to N6-succinyllysine. (3R)-3-hydroxydecanoyl-CoA is bound by residues Lys434, 509 to 514 (DSNPLH), Gly532, and Phe562. The 117-residue stretch at 483–599 (VPSRPPDAVL…QETGDIVISN (117 aa)) folds into the MaoC-like domain. Lys564 carries the N6-acetyllysine modification. An N6-succinyllysine mark is found at Lys578 and Lys662. One can recognise an SCP2 domain in the interval 623–735 (SALVFGEIGR…QMILKDYAKL (113 aa)). Lys668 is subject to N6-acetyllysine. Substrate is bound by residues Gln705 and Gln723. Position 724 is an N6-succinyllysine (Lys724). The short motif at 733–735 (AKL) is the Microbody targeting signal element.

Belongs to the short-chain dehydrogenases/reductases (SDR) family. Homodimer.

Its subcellular location is the peroxisome. The enzyme catalyses a (3R)-3-hydroxyacyl-CoA + NAD(+) = a 3-oxoacyl-CoA + NADH + H(+). It catalyses the reaction (24R,25R)-3alpha,7alpha,12alpha,24-tetrahydroxy-5beta-cholestan-26-oyl-CoA = (24E)-3alpha,7alpha,12alpha-trihydroxy-5beta-cholest-24-en-26-oyl-CoA + H2O. The catalysed reaction is a (3R)-3-hydroxyacyl-CoA = a (2E)-enoyl-CoA + H2O. It carries out the reaction (2E)-octenoyl-CoA + H2O = (3R)-hydroxyoctanoyl-CoA. The enzyme catalyses (3R)-hydroxyoctanoyl-CoA + NAD(+) = 3-oxooctanoyl-CoA + NADH + H(+). It catalyses the reaction (3R)-hydroxyhexadecanoyl-CoA + NAD(+) = 3-oxohexadecanoyl-CoA + NADH + H(+). The catalysed reaction is (2E)-hexadecenedioyl-CoA + H2O = (3R)-hydroxyhexadecanedioyl-CoA. It carries out the reaction (3R)-hydroxyhexadecanedioyl-CoA + NAD(+) = 3-oxohexadecanedioyl-CoA + NADH + H(+). The enzyme catalyses (3R)-hydroxyhexadecanoyl-CoA = (2E)-hexadecenoyl-CoA + H2O. It catalyses the reaction (3R)-3-hydroxydecanoyl-CoA = (2E)-decenoyl-CoA + H2O. The catalysed reaction is (3R)-3-hydroxydecanoyl-CoA + NAD(+) = 3-oxodecanoyl-CoA + NADH + H(+). It carries out the reaction (24R,25R)-3alpha,7alpha,12alpha,24-tetrahydroxy-5beta-cholestan-26-oyl-CoA + NAD(+) = 3alpha,7alpha,12alpha-trihydroxy-24-oxo-5beta-cholestan-26-oyl-CoA + NADH + H(+). It functions in the pathway lipid metabolism; fatty acid beta-oxidation. Functionally, bifunctional enzyme acting on the peroxisomal fatty acid beta-oxidation pathway. Catalyzes two of the four reactions in fatty acid degradation: hydration of 2-enoyl-CoA (trans-2-enoyl-CoA) to produce (3R)-3-hydroxyacyl-CoA, and dehydrogenation of (3R)-3-hydroxyacyl-CoA to produce 3-ketoacyl-CoA (3-oxoacyl-CoA), which is further metabolized by SCPx. Can use straight-chain and branched-chain fatty acids, as well as bile acid intermediates as substrates. The protein is Peroxisomal multifunctional enzyme type 2 of Rattus norvegicus (Rat).